The sequence spans 438 residues: Probable chaperone protein ClpB 1 (438 aa).

A coiled-coil region spans residues 1-94 (MNTADTRQRL…NNRKIEARQA (94 aa)). Positions 1 to 118 (MNTADTRQRL…IADIVSRWTG (118 aa)) are linker. Positions 128–345 (ERQKLLGIES…RIDEVILFTP (218 aa)) are NBD2. 178 to 185 (GPTGVGKT) is an ATP binding site. The segment at 346–438 (LTRENLREIV…ENDAIVMKKK (93 aa)) is C-terminal.

This sequence belongs to the ClpA/ClpB family. As to quaternary structure, homohexamer. The oligomerization is ATP-dependent.

Its subcellular location is the cytoplasm. Functionally, part of a stress-induced multi-chaperone system, it is involved in the recovery of the cell from heat-induced damage, in cooperation with DnaK, DnaJ and GrpE. Acts before DnaK, in the processing of protein aggregates. Protein binding stimulates the ATPase activity; ATP hydrolysis unfolds the denatured protein aggregates, which probably helps expose new hydrophobic binding sites on the surface of ClpB-bound aggregates, contributing to the solubilization and refolding of denatured protein aggregates by DnaK. The chain is Probable chaperone protein ClpB 1 (clpB1) from Chlorobaculum tepidum (strain ATCC 49652 / DSM 12025 / NBRC 103806 / TLS) (Chlorobium tepidum).